The primary structure comprises 377 residues: Chaperone MoxR1 (377 aa).

Residues 1 to 33 (MTSAGGFPAGAGGYQTPGGHSASPAHEAPPGGA) form a disordered region. Gly residues predominate over residues 7 to 16 (FPAGAGGYQT). Low complexity predominate over residues 19–33 (GHSASPAHEAPPGGA). 78-85 (GVPGVAKT) contributes to the ATP binding site.

Belongs to the MoxR family. As to quaternary structure, interacts with RipA. Interacts with host Toll-like receptor 4 (TLR4).

Displays ATP-enhanced chaperone activity. Required for the proper folding of the peptidoglycan endopeptidase RipA and its secretion through the TAT secretion system. In vitro, prevents thermal aggregation of MalZ protein and protects the functional activity of the restriction enzyme NdeI from thermal inactivation. Functionally, could be a moonlighting protein that uses a multipronged approach to dampen host-directed immunity for efficient replication, survival and pathogenesis. Can enhance virulence by inhibiting autophagy and apoptosis, and disrupting cellular bioenergetics. Binds and activates host TLR4 on the surface of macrophage cells, leading to the activation of the host NFKB and MAPK signaling cascades and enhanced secretion of proinflammatory cytokines. Inhibits autophagic flux via activation of PI3K-AKT-MTOR-ULK1 signaling cascade and represses apoptosis via inhibiting protooncogene c-FOS and MAPK JNK1/2. Also induces robust disruption of cellular bioenergetics by metabolic reprogramming to rewire the citric acid cycle intermediates for its benefit. This Mycobacterium tuberculosis (strain ATCC 25618 / H37Rv) protein is Chaperone MoxR1.